Here is a 985-residue protein sequence, read N- to C-terminus: SWI/SNF complex subunit SWI3D (985 aa).

Residues 1 to 55 (MEEKRRDSAGTLAFAGSSGDSPASEPMPAPRRRGGGLKRKANALGGSNFFSSAPS) are disordered. Over residues 30-41 (PRRRGGGLKRKA) the composition is skewed to basic residues. Residues 108 to 133 (EKPKEEEERNKAIREWEALEAKIEAD) adopt a coiled-coil conformation. One can recognise an SWIRM domain in the interval 145–242 (HVVPNHCGWF…FHPFPPTDTG (98 aa)). The ZZ-type; degenerate zinc finger occupies 305 to 359 (AVEYHCNSCSADCSRKRYHCPKQADFDLCTECFNSGKFSSDMSSSDFILMEPAEA). Residues C310, C313, C333, and C336 each contribute to the Zn(2+) site. Residues 362–413 (VGSGKWTDQETLLLLEALEIFKENWNEIAEHVATKTKAQCMLHFLQMPIEDA) enclose the SANT domain. Basic and acidic residues-rich tracts occupy residues 428–464 (TTDL…KEVP), 493–502 (AEQKTPKLET), and 615–661 (DNSH…EKQP). 2 disordered regions span residues 428-502 (TTDL…KLET) and 591-814 (EDPP…EGKK). Over residues 662-671 (GSRTENSTTK) the composition is skewed to polar residues. Residues 703–724 (CSGKELQEPLKDGNKLSSENKD) are compositionally biased toward basic and acidic residues. The span at 725 to 736 (ASQSTVSQSAAD) shows a compositional bias: polar residues. Basic and acidic residues predominate over residues 742–776 (ASRDVEMKDTLQSEKDPEDVVKTVGEKVQLAKEEG). Over residues 780–800 (VLSTPDKSVSQQPIGSASAPE) the composition is skewed to polar residues. Residues 839 to 900 (ISAAAVKAKN…EQLERSRQRL (62 aa)) adopt a coiled-coil conformation. The interval 944-985 (MAFPRPPMPRPPGFPVPGSFVAATTMTGSSDPSPGSDNVSSV) is disordered. The span at 947–958 (PRPPMPRPPGFP) shows a compositional bias: pro residues. A compositionally biased stretch (polar residues) spans 965 to 985 (AATTMTGSSDPSPGSDNVSSV).

Interacts with SWI3B, but not with BSH. Component of a RNA-directed DNA methylation (RdDM) complex that contains at least MORC6, MORC1/CRT1, MORC2, SWI3D and SUVH9. Interacts with MORC6 and SUVH9. Ubiquitously expressed.

Its subcellular location is the nucleus. Component of a multiprotein complex equivalent of the SWI/SNF complex, an ATP-dependent chromatin-remodeling complex, which is required for the positive and negative regulation of gene expression of a large number of genes. It changes chromatin structure by altering DNA-histone contacts within a nucleosome, leading eventually to a change in nucleosome position, thus facilitating or repressing binding of gene-specific transcription factors. This Arabidopsis thaliana (Mouse-ear cress) protein is SWI/SNF complex subunit SWI3D (SWI3D).